A 545-amino-acid chain; its full sequence is External NADH-ubiquinone oxidoreductase 2, mitochondrial (545 aa).

A mitochondrion-targeting transit peptide spans 1 to 21; that stretch reads MLPRLGFARTARSIHRFKMTQ. Residue 99 to 129 participates in FAD binding; sequence ELVILGTGWGAISLLKKLDTSLYNVTVVSPR. 260–296 serves as a coordination point for NAD(+); that stretch reads LTFVVVGGGPTGVEFAAELQDYINQDLRKWMPDLSKE.

It belongs to the NADH dehydrogenase family.

The protein localises to the mitochondrion intermembrane space. It catalyses the reaction a quinone + NADH + H(+) = a quinol + NAD(+). The catalysed reaction is a ubiquinone + NADH + H(+) = a ubiquinol + NAD(+). Functionally, external NADH dehydrogenase required for optimum cellular growth with a number of nonfermentable carbon sources, including ethanol. With NDE1, performes the mitochondrial oxidation of cytosolic NADH under these growth conditions. Regulates the mitochondrial glycerol-3-phosphate dehydrogenase, GUT2, also involved in cytosolic NADH oxidation. The chain is External NADH-ubiquinone oxidoreductase 2, mitochondrial (NDE2) from Saccharomyces cerevisiae (strain ATCC 204508 / S288c) (Baker's yeast).